A 479-amino-acid chain; its full sequence is MEKGLTLPQDCRDFVHSLKMRSKYALFLVFVVIVFVFIEKENKIISRVSDKLKQIPQALADANSTDPALILAENASLLSLSELDSAFSQLQSRLRNLSLQLGVEPAMEAAGEEEEEQRKEEEPPRPAVAGPRRHVLLMATTRTGSSFVGEFFNQQGNIFYLFEPLWHIERTVSFEPGGANAAGSALVYRDVLKQLFLCDLYVLEHFITPLPEDHLTQFMFRRGSSRSLCEDPVCTPFVKKVFEKYHCKNRRCGPLNVTLAAEACRRKEHMALKAVRIRQLEFLQPLAEDPRLDLRVIQLVRDPRAVLASRMVAFAGKYKTWKKWLDDEGQDGLREEEVQRLRGNCESIRLSAELGLRQPAWLRGRYMLVRYEDVARGPLQKAREMYRFAGIPLTPQVEDWIQKNTQAAHDGSGIYSTQKNSSEQFEKWRFSMPFKLAQVVQAACGPAMRLFGYKLARDAAALTNRSVSLLEERGTFWVT.

The Cytoplasmic segment spans residues 1–20 (MEKGLTLPQDCRDFVHSLKM). A helical; Signal-anchor for type II membrane protein membrane pass occupies residues 21–38 (RSKYALFLVFVVIVFVFI). Residues 39 to 479 (EKENKIISRV…LEERGTFWVT (441 aa)) lie on the Lumenal side of the membrane. Asparagine 63, asparagine 74, and asparagine 96 each carry an N-linked (GlcNAc...) asparagine glycan. Positions 108 to 128 (EAAGEEEEEQRKEEEPPRPAV) are disordered. Residue 141-147 (TRTGSSF) coordinates 3'-phosphoadenylyl sulfate. Asparagine 256 carries N-linked (GlcNAc...) asparagine glycosylation. 301 to 309 (RDPRAVLAS) is a 3'-phosphoadenylyl sulfate binding site. N-linked (GlcNAc...) asparagine glycans are attached at residues asparagine 420 and asparagine 464.

It belongs to the sulfotransferase 1 family. Gal/GlcNAc/GalNAc subfamily. Post-translationally, N-glycosylated. As to expression, widely expressed in adult tissues. Expressed in heart, placenta, skeletal muscle and pancreas. Also expressed in various immune tissues such as spleen, lymph node, thymus and appendix.

It localises to the golgi apparatus membrane. The enzyme catalyses chondroitin beta-D-glucuronate + n 3'-phosphoadenylyl sulfate = chondroitin 6'-sulfate + n adenosine 3',5'-bisphosphate + n H(+). It catalyses the reaction 3'-phosphoadenylyl sulfate + keratan = adenosine 3',5'-bisphosphate + keratan 6'-sulfate.. Functionally, sulfotransferase that utilizes 3'-phospho-5'-adenylyl sulfate (PAPS) as sulfonate donor to catalyze the transfer of sulfate to position 6 of the N-acetylgalactosamine (GalNAc) residue of chondroitin. Chondroitin sulfate constitutes the predominant proteoglycan present in cartilage and is distributed on the surfaces of many cells and extracellular matrices. Catalyzes with a lower efficiency the sulfation of Gal residues of keratan sulfate, another glycosaminoglycan. Can also catalyze the sulfation of the Gal residues in sialyl N-acetyllactosamine (sialyl LacNAc) oligosaccharides. May play a role in the maintenance of naive T-lymphocytes in the spleen. The protein is Carbohydrate sulfotransferase 3 (CHST3) of Homo sapiens (Human).